The following is a 465-amino-acid chain: Cruciform DNA-recognizing protein 1 (465 aa).

Disordered stretches follow at residues 107–227 (EAGG…VPNP) and 247–275 (RLNK…PALP). The span at 127 to 151 (NRKKNKRNNKKRKSKLKKKSTKNNK) shows a compositional bias: basic residues. Ser-153 and Ser-156 each carry phosphoserine. Acidic residues predominate over residues 156–165 (SXDDNEEEDX). The interval 160–161 (NE) is X-DNA-binding. Residues 166–177 (VTGTTTEDVTGT) show a composition bias toward low complexity. At Thr-182 the chain carries Phosphothreonine. A Phosphoserine modification is found at Ser-271. Thr-295 is modified (phosphothreonine). Residues 312 to 465 (PTPEAQISIP…FFGKLKKLFK (154 aa)) are disordered. Phosphoserine occurs at positions 319 and 343. Residues 337–363 (LVEKRESTEGVSDGSKKVENKAKKDEE) show a composition bias toward basic and acidic residues. Thr-366 carries the phosphothreonine modification. Basic and acidic residues-rich tracts occupy residues 385 to 398 (AEGR…EEKE) and 404 to 428 (EKGS…EVKK). A Phosphoserine modification is found at Ser-394. Ser-440 carries the post-translational modification Phosphoserine. A compositionally biased stretch (basic residues) spans 451 to 465 (KKKTGFFGKLKKLFK).

This sequence belongs to the CRP1/MDG1 family. Post-translationally, cleaved in the vicinity of position 160 to give an X-DNA-binding N-terminal subpeptide and a non-DNA-binding C-terminal subpeptide.

Its function is as follows. Cruciform DNA-binding protein which exerts an enhancing effect on the cleavage of cruciform DNA (X-DNA) by endonuclease VII from bacteriophage T4. This is Cruciform DNA-recognizing protein 1 (CRP1) from Saccharomyces cerevisiae (strain FostersB) (Baker's yeast).